Consider the following 185-residue polypeptide: Acireductone dioxygenase (185 aa).

The segment at 1-23 (MSRLSIHPEGNTNATSPAEPLLE) is disordered. Residues His-102, His-104, Glu-108, and His-146 each contribute to the Fe(2+) site. Residues His-102, His-104, Glu-108, and His-146 each coordinate Ni(2+).

Belongs to the acireductone dioxygenase (ARD) family. In terms of assembly, monomer. Requires Fe(2+) as cofactor. Ni(2+) is required as a cofactor.

The enzyme catalyses 1,2-dihydroxy-5-(methylsulfanyl)pent-1-en-3-one + O2 = 3-(methylsulfanyl)propanoate + CO + formate + 2 H(+). It carries out the reaction 1,2-dihydroxy-5-(methylsulfanyl)pent-1-en-3-one + O2 = 4-methylsulfanyl-2-oxobutanoate + formate + 2 H(+). The protein operates within amino-acid biosynthesis; L-methionine biosynthesis via salvage pathway; L-methionine from S-methyl-5-thio-alpha-D-ribose 1-phosphate: step 5/6. Catalyzes 2 different reactions between oxygen and the acireductone 1,2-dihydroxy-3-keto-5-methylthiopentene (DHK-MTPene) depending upon the metal bound in the active site. Fe-containing acireductone dioxygenase (Fe-ARD) produces formate and 2-keto-4-methylthiobutyrate (KMTB), the alpha-ketoacid precursor of methionine in the methionine recycle pathway. Ni-containing acireductone dioxygenase (Ni-ARD) produces methylthiopropionate, carbon monoxide and formate, and does not lie on the methionine recycle pathway. The protein is Acireductone dioxygenase of Prochlorococcus marinus (strain MIT 9303).